A 1427-amino-acid polypeptide reads, in one-letter code: MPSDSEEVCLQQSGTGVYENVVYSKETSDRAKRYAGDTNRKTIGRYSAAVQNLIPLRTTERNKNNGGSRIDDAGLFSFVTYSWVFPYLYQAVRGKLDRNQVWGCSFYDSCGLNMARLEVLWEDEKKANAKSPSLFKVIYRFISTRLWFSCAVFFFCLIFGFIGPTCFIRRLIAFAENPERDEQSRIVYSYGIALVAAISVVEFARVLSYGATWAVSYRTGIRVRGAVLALLYKNVLNSKDLCGKTESDVINIFANDGQRLFDAVTFAPLVLVGPLVLVGGIGYLLMVIGRWSLLGILVFFVFDVIQFGLGKSMVACRNLAIVKTEKRISMMAEIIKYIRIVKMNGWEQIFSAKIDQFRKEEKVQIRKSGYAQSLAIACGPVVPVVAAILTFVGVVLAGNDLLASDAFSAITVYFVMLFGIRMIPYGSRYLAEAVVAMRRIQEYLLLEQYAPYPVTNAEDVVLDCQGATYTYQPKAAKAPVDETKEPTENEVIVVETPVFTCSFDKLSIKRGEHIAVIGAVGCGKSAILKAISGHMFTTDDALSVDRSQTVYVPQKAWIFNGTVQDNILFGDKMNSERYYKAVNGCQLTEDLTTLSVGDRTEVGERGATLSGGQKARVALARAVFQTKNLYLFDDIFASLDKKVANKIHEEIIQKLLKKKALMMVTNNMELLHHFDRVLFVEGGNIVADGNHDILYEKNDAYKTFVDACETYQATSGATSPCGDGPAQPAPLDAEILRNSSEDLKGDADKLISDEEDMGNSTIAWRIYKQYIHAAGGWPIWTCLVIGFIVNVVSNIFSTYWLSRWLKKGHDETTTITNGTEFLEMKTSLADSPVTGFYAAVYLVALVVLTISGLFKACVFVKVSLTAATRLHDRMFQAVIHGATSFFDSTPTGRILNRFSKDMDEIDVKLPFTAEVFLQNMITCLGFLVVITSVFPYFLLFAIPLFVVFVVFVSCFRAGIRNLKRSEHISRSPLYDHVSASLEGITTIHTFQQSNRFLEVLKKHLDCNSGAIFMFQSAMRWLAVWLDLLVVVMTAIVALLTVMLTGTVSPADAGMAIAFAVQMSGIFQFAVRTQTELEAKMTSVERVSYYADNIPEDGEWNTRQGLDIESSWPANGQINFSEVNLRYRKSHPLALNDITFEIKGGEKVGIIGRTGSGKSSLANLIFRLYPVTNGTIYIDGVDIRTVGLVKLRRGISAIAQDPSLFSGTVRFNLDPSLEYSDSMIWEALEKCHLKTLVQSLDKKLEADVSHGGNNFSVGERQLFCLARALLMKSRIVILDEATASVDAGTDKLIQEVIKTVFADATVIIIAHRLDNVRNMDRIMHLKNGKLINFTTPQEMFKDDWSVYKLEDKDDDQHSAVVVGENSEHSMEKSSQGSSQESDDIVKVENEQKDSSDDVVHIESGDDDVKADSSEVKETSSDTDIEVVQ.

At 1-147 (MPSDSEEVCL…IYRFISTRLW (147 aa)) the chain is on the cytoplasmic side. Residues 148–168 (FSCAVFFFCLIFGFIGPTCFI) traverse the membrane as a helical segment. In terms of domain architecture, ABC transmembrane type-1 1 spans 151 to 432 (AVFFFCLIFG…IPYGSRYLAE (282 aa)). Topologically, residues 169-185 (RRLIAFAENPERDEQSR) are extracellular. Residues 186-206 (IVYSYGIALVAAISVVEFARV) traverse the membrane as a helical segment. The Cytoplasmic portion of the chain corresponds to 207–268 (LSYGATWAVS…RLFDAVTFAP (62 aa)). A helical transmembrane segment spans residues 269 to 289 (LVLVGPLVLVGGIGYLLMVIG). Arg-290 is a topological domain (extracellular). The chain crosses the membrane as a helical span at residues 291-311 (WSLLGILVFFVFDVIQFGLGK). Over 312–375 (SMVACRNLAI…RKSGYAQSLA (64 aa)) the chain is Cytoplasmic. Residues 376 to 396 (IACGPVVPVVAAILTFVGVVL) traverse the membrane as a helical segment. Residues 397 to 399 (AGN) are Extracellular-facing. A helical transmembrane segment spans residues 400–420 (DLLASDAFSAITVYFVMLFGI). Residues 421–770 (RMIPYGSRYL…TIAWRIYKQY (350 aa)) are Cytoplasmic-facing. An ABC transporter 1 domain is found at 486–707 (PTENEVIVVE…NDAYKTFVDA (222 aa)). 518–525 (GAVGCGKS) serves as a coordination point for ATP. A helical transmembrane segment spans residues 771–791 (IHAAGGWPIWTCLVIGFIVNV). One can recognise an ABC transmembrane type-1 2 domain in the interval 783 to 1078 (LVIGFIVNVV…AVRTQTELEA (296 aa)). Over 792–833 (VSNIFSTYWLSRWLKKGHDETTTITNGTEFLEMKTSLADSPV) the chain is Extracellular. Residue Asn-817 is glycosylated (N-linked (GlcNAc...) asparagine). The chain crosses the membrane as a helical span at residues 834–854 (TGFYAAVYLVALVVLTISGLF). At 855-909 (KACVFVKVSLTAATRLHDRMFQAVIHGATSFFDSTPTGRILNRFSKDMDEIDVKL) the chain is on the cytoplasmic side. A helical transmembrane segment spans residues 910 to 930 (PFTAEVFLQNMITCLGFLVVI). Position 931 (Thr-931) is a topological domain, extracellular. The chain crosses the membrane as a helical span at residues 932–952 (SVFPYFLLFAIPLFVVFVVFV). Residues 953–1022 (SCFRAGIRNL…MFQSAMRWLA (70 aa)) are Cytoplasmic-facing. Residues 1023 to 1043 (VWLDLLVVVMTAIVALLTVML) form a helical membrane-spanning segment. Residues 1044 to 1049 (TGTVSP) lie on the Extracellular side of the membrane. A helical membrane pass occupies residues 1050-1070 (ADAGMAIAFAVQMSGIFQFAV). Residues 1071–1427 (RTQTELEAKM…SSDTDIEVVQ (357 aa)) lie on the Cytoplasmic side of the membrane. The 235-residue stretch at 1117-1351 (INFSEVNLRY…DWSVYKLEDK (235 aa)) folds into the ABC transporter 2 domain. 1151–1158 (GRTGSGKS) is an ATP binding site. The interval 1361–1427 (VGENSEHSME…SSDTDIEVVQ (67 aa)) is disordered. A compositionally biased stretch (basic and acidic residues) spans 1382–1418 (DIVKVENEQKDSSDDVVHIESGDDDVKADSSEVKETS).

This sequence belongs to the ABC transporter superfamily. ABCC family. Conjugate transporter (TC 3.A.1.208) subfamily. Highly expressed in the intestine and pharynx. Expressed at low levels in the hypodermis and in some neurons.

The protein resides in the basolateral cell membrane. In terms of biological role, heme transporter required for the export of intestinal heme to different tissues and subcellular compartments. Also, required for the export of vitamin B12 from the intestine of the mother to the embryo to support embryonic development. This is Multidrug resistance-associated protein 5 from Caenorhabditis elegans.